A 569-amino-acid chain; its full sequence is GATOR1 complex protein NPRL3 (569 aa).

Disordered stretches follow at residues 27 to 60 and 441 to 476; these read PFQRSQEHPASQTNKPRSRYAVNNTGEHADDQDG and TPNALSFGSPTSSDDMTLTSPSMDNSSAELLPSGDS. Polar residues-rich tracts occupy residues 34 to 52 and 441 to 468; these read HPASQTNKPRSRYAVNNTG and TPNALSFGSPTSSDDMTLTSPSMDNSSA. Residue serine 476 is modified to Phosphoserine.

It belongs to the NPR3 family. In terms of assembly, within the GATOR complex, component of the GATOR1 subcomplex, made of DEPDC5, NPRL2 and NPRL3. GATOR1 mediates the strong interaction of the GATOR complex with small GTPases Rag (RagA/RRAGA, RagB/RRAGB, RagC/RRAGC and/or RagD/RRAGD) heterodimers. GATOR1 interacts with GPR155/LYCHOS; interaction takes place in presence of cholesterol and prevents interaction between GATOR1 and KICSTOR.

The protein resides in the lysosome membrane. Functionally, as a component of the GATOR1 complex functions as an inhibitor of the amino acid-sensing branch of the mTORC1 pathway. In response to amino acid depletion, the GATOR1 complex has GTPase activating protein (GAP) activity and strongly increases GTP hydrolysis by RagA/RRAGA (or RagB/RRAGB) within heterodimeric Rag complexes, thereby turning them into their inactive GDP-bound form, releasing mTORC1 from lysosomal surface and inhibiting mTORC1 signaling. In the presence of abundant amino acids, the GATOR1 complex is negatively regulated by GATOR2, the other GATOR subcomplex, in this amino acid-sensing branch of the TORC1 pathway. In Mus musculus (Mouse), this protein is GATOR1 complex protein NPRL3.